A 418-amino-acid polypeptide reads, in one-letter code: Serine--tRNA ligase (418 aa).

232–234 (TAE) contacts L-serine. ATP is bound by residues 263–265 (RRE) and valine 279. Glutamate 286 contributes to the L-serine binding site. 350 to 353 (EISS) is a binding site for ATP. Serine 385 provides a ligand contact to L-serine.

The protein belongs to the class-II aminoacyl-tRNA synthetase family. Type-1 seryl-tRNA synthetase subfamily. In terms of assembly, homodimer. The tRNA molecule binds across the dimer.

Its subcellular location is the cytoplasm. It catalyses the reaction tRNA(Ser) + L-serine + ATP = L-seryl-tRNA(Ser) + AMP + diphosphate + H(+). The enzyme catalyses tRNA(Sec) + L-serine + ATP = L-seryl-tRNA(Sec) + AMP + diphosphate + H(+). Its pathway is aminoacyl-tRNA biosynthesis; selenocysteinyl-tRNA(Sec) biosynthesis; L-seryl-tRNA(Sec) from L-serine and tRNA(Sec): step 1/1. Catalyzes the attachment of serine to tRNA(Ser). Is also able to aminoacylate tRNA(Sec) with serine, to form the misacylated tRNA L-seryl-tRNA(Sec), which will be further converted into selenocysteinyl-tRNA(Sec). This chain is Serine--tRNA ligase, found in Leptospira biflexa serovar Patoc (strain Patoc 1 / Ames).